The chain runs to 346 residues: Bifunctional phosphatase IMPL2, chloroplastic (346 aa).

Residues 1 to 61 constitute a chloroplast transit peptide; sequence MLAQSHFFSK…VSRRRFCLTM (61 aa). Mg(2+) is bound by residues E147, D165, and D168. E147 lines the substrate pocket. Substrate-binding positions include 167 to 170, 263 to 265, E282, and D289; these read IDGT and GCD. D289 provides a ligand contact to Mg(2+).

Belongs to the inositol monophosphatase superfamily. It depends on Mg(2+) as a cofactor. Ubiquitous. High expression in roots. Expressed in pistil and seed endosperm.

It is found in the plastid. The protein localises to the chloroplast. It catalyses the reaction a myo-inositol phosphate + H2O = myo-inositol + phosphate. It carries out the reaction L-histidinol phosphate + H2O = L-histidinol + phosphate. The catalysed reaction is beta-L-galactose 1-phosphate + H2O = L-galactose + phosphate. It participates in amino-acid biosynthesis; L-histidine biosynthesis; L-histidine from 5-phospho-alpha-D-ribose 1-diphosphate: step 8/9. Its pathway is polyol metabolism; myo-inositol biosynthesis; myo-inositol from D-glucose 6-phosphate: step 2/2. Phosphatase required for histidine production. Also acts on L-galactose 1-phosphate (L-Gal 1-P), D-myoinositol 3-phosphate (D-Ins 3-P) and D-myoinositol 1-phosphate (D-Ins 1-P). The polypeptide is Bifunctional phosphatase IMPL2, chloroplastic (HISN7) (Arabidopsis thaliana (Mouse-ear cress)).